We begin with the raw amino-acid sequence, 107 residues long: Ferredoxin (107 aa).

4Fe-4S ferredoxin-type domains follow at residues Glu8–Asn37 and Gly38–Glu67. Positions 17, 20, and 23 each coordinate [4Fe-4S] cluster. [3Fe-4S] cluster-binding residues include Cys27, Cys47, and Cys53. Cys57 is a binding site for [4Fe-4S] cluster.

As to quaternary structure, monomer. [4Fe-4S] cluster is required as a cofactor. [3Fe-4S] cluster serves as cofactor. The N-terminus is blocked.

Its function is as follows. Ferredoxins are iron-sulfur proteins that transfer electrons in a wide variety of metabolic reactions. This Pyrobaculum islandicum (strain DSM 4184 / JCM 9189 / GEO3) protein is Ferredoxin.